The chain runs to 196 residues: uncharacterized protein (196 aa).

Residues 122 to 135 show a composition bias toward basic and acidic residues; that stretch reads SEIEKKQEPIERKT. The segment at 122-150 is disordered; the sequence is SEIEKKQEPIERKTSTTTNTESNQEKPLR.

This is an uncharacterized protein from Leptospira interrogans.